Consider the following 360-residue polypeptide: Fructose-bisphosphate aldolase 1 (360 aa).

A D-glyceraldehyde 3-phosphate-binding site is contributed by S63. D110 serves as the catalytic Proton donor. Positions 111, 145, 175, and 227 each coordinate Zn(2+). G228 is a binding site for dihydroxyacetone phosphate. H266 provides a ligand contact to Zn(2+). A dihydroxyacetone phosphate-binding site is contributed by 267-269; sequence GGS.

It belongs to the class II fructose-bisphosphate aldolase family. As to quaternary structure, homodimer. Zn(2+) is required as a cofactor.

The catalysed reaction is beta-D-fructose 1,6-bisphosphate = D-glyceraldehyde 3-phosphate + dihydroxyacetone phosphate. It functions in the pathway carbohydrate degradation; glycolysis; D-glyceraldehyde 3-phosphate and glycerone phosphate from D-glucose: step 4/4. In terms of biological role, catalyzes the aldol condensation of dihydroxyacetone phosphate (DHAP or glycerone-phosphate) with glyceraldehyde 3-phosphate (G3P) to form fructose 1,6-bisphosphate (FBP) in gluconeogenesis and the reverse reaction in glycolysis. The protein is Fructose-bisphosphate aldolase 1 (FBA1) of Paracoccidioides lutzii (strain ATCC MYA-826 / Pb01) (Paracoccidioides brasiliensis).